Here is a 501-residue protein sequence, read N- to C-terminus: MAINAQEISALIKKQIENFQPNFDVTETGVVTYIGDGIARACGLDNAMSGELLEFDNGTFGMAQNLESSDIGIIILGDFNSIREGDTVKRTGKIMEVPVGQSLIGRVVNPLGQPVDGLGEIETTATRPVEAAAPGVMQRQSVSEPLQTGIKAIDALVPIGRGQRELVIGDRQTGKTSIAIDAIINQKGQDMICIYVAIGQKESTVRSQVEVLRKYGALDYTIVVTASASQPSPLLYIAPYAGVAMAEEFMYNGKHALIVYDDLSKQAVAYRELSLLLRRPPGREAYPGDVFYLHSRLLERSAKLSDELGGGSITALPFIETQAGDISAYIATNVISITDGQIFLQENLFNSGIRPAIDAGSSVSRVGGSAQIKAMKKVAGTLRLDLASYRELEAFTQFGSDLDSATQAKLNRGRRTVEVLKQGLHKPLAVEKQVLILYALTHGFLDSVPVDDILTFQDDMFDYIDSHDADIFETIRTTKDLPEEAVLDKAIQTFKDQSQFS.

169-176 (GDRQTGKT) serves as a coordination point for ATP.

Belongs to the ATPase alpha/beta chains family. F-type ATPases have 2 components, CF(1) - the catalytic core - and CF(0) - the membrane proton channel. CF(1) has five subunits: alpha(3), beta(3), gamma(1), delta(1), epsilon(1). CF(0) has three main subunits: a(1), b(2) and c(9-12). The alpha and beta chains form an alternating ring which encloses part of the gamma chain. CF(1) is attached to CF(0) by a central stalk formed by the gamma and epsilon chains, while a peripheral stalk is formed by the delta and b chains.

It is found in the cell membrane. It carries out the reaction ATP + H2O + 4 H(+)(in) = ADP + phosphate + 5 H(+)(out). In terms of biological role, produces ATP from ADP in the presence of a proton gradient across the membrane. The alpha chain is a regulatory subunit. This chain is ATP synthase subunit alpha, found in Streptococcus mutans serotype c (strain ATCC 700610 / UA159).